Consider the following 602-residue polypeptide: Glutamine--fructose-6-phosphate aminotransferase [isomerizing] (602 aa).

Residue Cys-2 is the Nucleophile; for GATase activity of the active site. The 221-residue stretch at 2–222 folds into the Glutamine amidotransferase type-2 domain; sequence CGIFGIIFAE…DGEYGYITAG (221 aa). SIS domains are found at residues 284 to 422 and 452 to 592; these read VANA…ALGH and LAKR…PDKP. The active-site For Fru-6P isomerization activity is the Lys-597.

As to quaternary structure, homodimer.

The protein localises to the cytoplasm. It carries out the reaction D-fructose 6-phosphate + L-glutamine = D-glucosamine 6-phosphate + L-glutamate. Catalyzes the first step in hexosamine metabolism, converting fructose-6P into glucosamine-6P using glutamine as a nitrogen source. The chain is Glutamine--fructose-6-phosphate aminotransferase [isomerizing] from Pyrobaculum aerophilum (strain ATCC 51768 / DSM 7523 / JCM 9630 / CIP 104966 / NBRC 100827 / IM2).